Here is a 350-residue protein sequence, read N- to C-terminus: Protein disulfide isomerase Creld2 (350 aa).

An N-terminal signal peptide occupies residues 1–22 (MHLLLAAAFGLLLLLPPPGAVA). A CXXC motif is present at residues 29–32 (CQRC). Disulfide bonds link C29–C32, C138–C152, C146–C164, and C166–C175. The region spanning 134–176 (DCQECQGGSERPCSGNGYCSGDGSRQGDGSCQCHTGYKGPLCI) is the EGF-like 1 domain. One copy of the FU 1 repeat lies at 191-238 (HSICSACDESCKTCSGPSNKDCIQCEVGWARVEDACVDVDECAAETSP). N-linked (GlcNAc...) asparagine glycosylation is present at N249. One copy of the FU 2 repeat lies at 251–298 (SYTCEDCDSTCVGCTGKGPANCKECIAGYTKESGQCTDIDECSLEEKA). The CXXC motif lies at 261-264 (CVGC). 4 cysteine pairs are disulfide-bonded: C261–C264, C292–C306, C299–C315, and C317–C328. The EGF-like 2; calcium-binding domain occupies 288–329 (DIDECSLEEKACKRKNENCYNVPGSFVCVCPEGFEETEDACV).

It belongs to the CRELD family. In terms of assembly, interacts with CHRNA4. Component of a complex containing at least CRELD2, MANF, MATN3 and PDIA4. Expressed in chondrocytes (at protein level).

It is found in the endoplasmic reticulum. The enzyme catalyses Catalyzes the rearrangement of -S-S- bonds in proteins.. Functionally, protein disulfide isomerase. Might play a role in the unfolded protein response. May regulate transport of alpha4-beta2 neuronal acetylcholine receptor. This Mus musculus (Mouse) protein is Protein disulfide isomerase Creld2 (Creld2).